The chain runs to 311 residues: tRNA-cytidine(32) 2-sulfurtransferase (311 aa).

Positions Ser47–Ser52 match the PP-loop motif motif. Positions 122, 125, and 213 each coordinate [4Fe-4S] cluster.

Belongs to the TtcA family. As to quaternary structure, homodimer. It depends on Mg(2+) as a cofactor. The cofactor is [4Fe-4S] cluster.

The protein resides in the cytoplasm. The enzyme catalyses cytidine(32) in tRNA + S-sulfanyl-L-cysteinyl-[cysteine desulfurase] + AH2 + ATP = 2-thiocytidine(32) in tRNA + L-cysteinyl-[cysteine desulfurase] + A + AMP + diphosphate + H(+). Its pathway is tRNA modification. In terms of biological role, catalyzes the ATP-dependent 2-thiolation of cytidine in position 32 of tRNA, to form 2-thiocytidine (s(2)C32). The sulfur atoms are provided by the cysteine/cysteine desulfurase (IscS) system. This Enterobacter sp. (strain 638) protein is tRNA-cytidine(32) 2-sulfurtransferase.